We begin with the raw amino-acid sequence, 146 residues long: Hemoglobin subunit beta-2 (146 aa).

Position 1 is an N-acetylvaline (Val-1). One can recognise a Globin domain in the interval 2–146; it reads HLHGDEKAAV…VASALAHKYH (145 aa). Position 17 is an N6-succinyllysine (Lys-17). Ser-44 carries the post-translational modification Phosphoserine. Lys-59 bears the N6-succinyllysine mark. Heme b contacts are provided by His-63 and His-92. Position 104 is an asymmetric dimethylarginine (Arg-104). The residue at position 123 (Thr-123) is a Phosphothreonine.

It belongs to the globin family. As to quaternary structure, heterotetramer of two alpha chains and two beta chains. In terms of tissue distribution, red blood cells.

Involved in oxygen transport from the lung to the various peripheral tissues. This Tapirus terrestris (Lowland tapir) protein is Hemoglobin subunit beta-2 (HBB2).